A 561-amino-acid polypeptide reads, in one-letter code: Arginine--tRNA ligase (561 aa).

The 'HIGH' region signature appears at 123–133 (PNIAKDMHVGH).

This sequence belongs to the class-I aminoacyl-tRNA synthetase family. As to quaternary structure, monomer.

Its subcellular location is the cytoplasm. The catalysed reaction is tRNA(Arg) + L-arginine + ATP = L-arginyl-tRNA(Arg) + AMP + diphosphate. This Chlamydia pneumoniae (Chlamydophila pneumoniae) protein is Arginine--tRNA ligase (argS).